A 357-amino-acid chain; its full sequence is Large ribosomal subunit protein uL10 (357 aa).

The interval 311 to 357 (MVSRSAEAAERKEKEEEEEEEAEEEEAEEEEEEEEEEAAAGLGALFG) is disordered. The segment covering 325-348 (EEEEEEEAEEEEAEEEEEEEEEEA) has biased composition (acidic residues).

The protein belongs to the universal ribosomal protein uL10 family. In terms of assembly, part of the 50S ribosomal subunit. Forms part of the ribosomal stalk which helps the ribosome interact with GTP-bound translation factors. Forms a heptameric L10(L12)2(L12)2(L12)2 complex, where L10 forms an elongated spine to which the L12 dimers bind in a sequential fashion.

Its function is as follows. Forms part of the ribosomal stalk, playing a central role in the interaction of the ribosome with GTP-bound translation factors. This Methanopyrus kandleri (strain AV19 / DSM 6324 / JCM 9639 / NBRC 100938) protein is Large ribosomal subunit protein uL10.